A 382-amino-acid chain; its full sequence is Leucine carboxyl methyltransferase 1 (382 aa).

A compositionally biased stretch (polar residues) spans M1–T11. Residues M1–N45 are disordered. Residues R88, G121, D146, D193–L194, and E230 each bind S-adenosyl-L-methionine.

Belongs to the methyltransferase superfamily. LCMT family.

The catalysed reaction is [phosphatase 2A protein]-C-terminal L-leucine + S-adenosyl-L-methionine = [phosphatase 2A protein]-C-terminal L-leucine methyl ester + S-adenosyl-L-homocysteine. Its function is as follows. Methylates the carboxyl group of the C-terminal leucine residue of protein phosphatase 2A catalytic subunits to form alpha-leucine ester residues. The sequence is that of Leucine carboxyl methyltransferase 1 (ppm1) from Emericella nidulans (strain FGSC A4 / ATCC 38163 / CBS 112.46 / NRRL 194 / M139) (Aspergillus nidulans).